The sequence spans 415 residues: Trehalose synthase (415 aa).

Belongs to the glycosyltransferase group 1 family. Glycosyltransferase 4 subfamily. Homodimer. Mg(2+) is required as a cofactor.

The enzyme catalyses an NDP-alpha-D-glucose + D-glucose = alpha,alpha-trehalose + a ribonucleoside 5'-diphosphate + H(+). Synthesizes trehalose from ADP-, UDP- or GDP-glucose and glucose. The chain is Trehalose synthase from Pyrococcus horikoshii (strain ATCC 700860 / DSM 12428 / JCM 9974 / NBRC 100139 / OT-3).